Reading from the N-terminus, the 206-residue chain is Small ribosomal subunit protein uS4 (206 aa).

One can recognise an S4 RNA-binding domain in the interval 96–156 (GRLDNVVYRM…EKAKKQSRVK (61 aa)).

The protein belongs to the universal ribosomal protein uS4 family. In terms of assembly, part of the 30S ribosomal subunit. Contacts protein S5. The interaction surface between S4 and S5 is involved in control of translational fidelity.

In terms of biological role, one of the primary rRNA binding proteins, it binds directly to 16S rRNA where it nucleates assembly of the body of the 30S subunit. With S5 and S12 plays an important role in translational accuracy. This Salmonella agona (strain SL483) protein is Small ribosomal subunit protein uS4.